The following is a 180-amino-acid chain: Membrane protein UL121 (180 aa).

An N-terminal signal peptide occupies residues 1-27 (MWGCGWSRILVLLLLMCMALMARGTYG). A helical transmembrane segment spans residues 143–163 (LGLLYAVCLILSFSIVTAALW).

It belongs to the HHV-5 UL121 protein family.

It localises to the host membrane. The protein is Membrane protein UL121 (UL121) of Human cytomegalovirus (strain Merlin) (HHV-5).